A 495-amino-acid chain; its full sequence is 1-aminocyclopropane-1-carboxylate synthase 6 (495 aa).

The substrate site is built by glutamate 58 and tyrosine 96. Lysine 280 is modified (N6-(pyridoxal phosphate)lysine). Residues serine 480, serine 483, and serine 488 each carry the phosphoserine modification.

The protein belongs to the class-I pyridoxal-phosphate-dependent aminotransferase family. In terms of assembly, homodimer and heterodimer. In vivo, the relevance of heterodimerization with other ACS enzymes is however unsure. Interacts with GRF3. It depends on pyridoxal 5'-phosphate as a cofactor. Phosphorylated on serine residue by MAP kinase (MPK6). In terms of processing, may be processed at its C-terminus. In terms of tissue distribution, expressed in roots and flowers.

It catalyses the reaction S-adenosyl-L-methionine = 1-aminocyclopropane-1-carboxylate + S-methyl-5'-thioadenosine + H(+). It functions in the pathway alkene biosynthesis; ethylene biosynthesis via S-adenosyl-L-methionine; ethylene from S-adenosyl-L-methionine: step 1/2. In terms of biological role, 1-aminocyclopropane-1-carboxylate synthase (ACS) enzymes catalyze the conversion of S-adenosyl-L-methionine (SAM) into 1-aminocyclopropane-1-carboxylate (ACC), a direct precursor of ethylene. Involved in bacterial flagellin-induced ethylene production. The polypeptide is 1-aminocyclopropane-1-carboxylate synthase 6 (ACS6) (Arabidopsis thaliana (Mouse-ear cress)).